A 93-amino-acid chain; its full sequence is UPF0223 protein SAG0995 (93 aa).

It belongs to the UPF0223 family.

This chain is UPF0223 protein SAG0995, found in Streptococcus agalactiae serotype V (strain ATCC BAA-611 / 2603 V/R).